The chain runs to 409 residues: UPF0261 protein Spro_4740 (409 aa).

The protein belongs to the UPF0261 family.

This Serratia proteamaculans (strain 568) protein is UPF0261 protein Spro_4740.